Consider the following 110-residue polypeptide: Nucleotide-binding protein in fmt 3'region (110 aa).

An ATP-binding site is contributed by 8–15; that stretch reads GLSGAGKT. 57–60 provides a ligand contact to GTP; it reads DARA.

The protein belongs to the RapZ-like family.

Its function is as follows. Displays ATPase and GTPase activities. The polypeptide is Nucleotide-binding protein in fmt 3'region (Thermus thermophilus).